Here is a 452-residue protein sequence, read N- to C-terminus: Probable splicing factor, arginine/serine-rich 7 (452 aa).

2 consecutive RRM domains span residues 10–91 (KILH…YPNP) and 163–240 (RTVY…HSRV). Residues 258–452 (EEAIRMGRNG…GNGDVVMASE (195 aa)) are disordered. Positions 259–272 (EAIRMGRNGDDRDR) are enriched in basic and acidic residues. Residues 273 to 290 (RRSRSPRRRRSPSPRRRR) show a composition bias toward basic residues. The span at 291–305 (DSRDRDRDRDRDRRR) shows a compositional bias: basic and acidic residues. 3 stretches are compositionally biased toward basic residues: residues 323–335 (KRSR…RRSR), 345–360 (KRSR…KSRD), and 370–382 (SKDR…RSRS). Positions 383 to 421 (RSPEKRRDKEDRKTEKKENENESSLREKLLEKKAARKDS) are enriched in basic and acidic residues.

It belongs to the splicing factor SR family. In terms of processing, extensively phosphorylated on serine residues in the RS domain.

It localises to the nucleus. The chain is Probable splicing factor, arginine/serine-rich 7 (rsp-7) from Caenorhabditis elegans.